Consider the following 320-residue polypeptide: 4-hydroxythreonine-4-phosphate dehydrogenase (320 aa).

T132 contacts substrate. Residues H161, H205, and H258 each coordinate a divalent metal cation. Substrate-binding residues include K266, N275, and R284.

Belongs to the PdxA family. As to quaternary structure, homodimer. Requires a divalent metal cation as cofactor.

It localises to the cytoplasm. It catalyses the reaction 4-(phosphooxy)-L-threonine + NAD(+) = 3-amino-2-oxopropyl phosphate + CO2 + NADH. The protein operates within cofactor biosynthesis; pyridoxine 5'-phosphate biosynthesis; pyridoxine 5'-phosphate from D-erythrose 4-phosphate: step 4/5. Functionally, catalyzes the NAD(P)-dependent oxidation of 4-(phosphooxy)-L-threonine (HTP) into 2-amino-3-oxo-4-(phosphooxy)butyric acid which spontaneously decarboxylates to form 3-amino-2-oxopropyl phosphate (AHAP). This chain is 4-hydroxythreonine-4-phosphate dehydrogenase, found in Aquifex aeolicus (strain VF5).